Here is a 556-residue protein sequence, read N- to C-terminus: Delta-1-pyrroline-5-carboxylate dehydrogenase, mitochondrial (556 aa).

Residues 1-17 constitute a mitochondrion transit peptide; it reads MLRARSAVSQSWKGFKT. NAD(+) contacts are provided by residues Lys226 and 279 to 283; that span reads GSVPT. Catalysis depends on Glu307, which acts as the Proton acceptor. The active-site Nucleophile is Cys341. NAD(+) is bound at residue Glu440. Ser506 provides a ligand contact to substrate.

It belongs to the aldehyde dehydrogenase family.

It localises to the mitochondrion matrix. It catalyses the reaction L-glutamate 5-semialdehyde + NAD(+) + H2O = L-glutamate + NADH + 2 H(+). It participates in amino-acid degradation; L-proline degradation into L-glutamate; L-glutamate from L-proline: step 2/2. In terms of biological role, irreversible conversion of delta-1-pyrroline-5-carboxylate (P5C), derived either from proline or ornithine, to glutamate. This is a necessary step in the pathway interconnecting the urea and tricarboxylic acid cycles. This chain is Delta-1-pyrroline-5-carboxylate dehydrogenase, mitochondrial (aldh4a1), found in Danio rerio (Zebrafish).